We begin with the raw amino-acid sequence, 457 residues long: Embryogenesis-associated protein EMB8 (457 aa).

The disordered stretch occupies residues 39-59 (KKPAAGACEEQDELTSGSAAR). The 241-residue stretch at 151 to 391 (PVLILLPGLT…LVVTPNGGHL (241 aa)) folds into the AB hydrolase-1 domain. Catalysis depends on charge relay system residues Ser231, Asp361, and His390. A compositionally biased stretch (basic and acidic residues) spans 438-447 (VDSVHTRETN). Positions 438 to 457 (VDSVHTRETNNYKSPIENVN) are disordered. Residues 448-457 (NYKSPIENVN) show a composition bias toward polar residues.

Belongs to the AB hydrolase superfamily. AB hydrolase 4 family.

The sequence is that of Embryogenesis-associated protein EMB8 (EMB8) from Picea glauca (White spruce).